A 398-amino-acid polypeptide reads, in one-letter code: Bifunctional enzyme IspD/IspF (398 aa).

A 2-C-methyl-D-erythritol 4-phosphate cytidylyltransferase region spans residues 1-234 (MSNSKRTAAI…SRLGALLGDI (234 aa)). The 2-C-methyl-D-erythritol 2,4-cyclodiphosphate synthase stretch occupies residues 235–398 (RTGTGYDVHA…LPWGTNGLAD (164 aa)). A divalent metal cation-binding residues include Asp-241 and His-243. 4-CDP-2-C-methyl-D-erythritol 2-phosphate-binding positions include 241 to 243 (DVH) and 267 to 268 (HS). His-275 provides a ligand contact to a divalent metal cation. Residues 289 to 291 (DIG), 365 to 368 (TTSE), Phe-372, and Arg-375 contribute to the 4-CDP-2-C-methyl-D-erythritol 2-phosphate site.

In the N-terminal section; belongs to the IspD/TarI cytidylyltransferase family. IspD subfamily. The protein in the C-terminal section; belongs to the IspF family. A divalent metal cation serves as cofactor.

The catalysed reaction is 2-C-methyl-D-erythritol 4-phosphate + CTP + H(+) = 4-CDP-2-C-methyl-D-erythritol + diphosphate. It carries out the reaction 4-CDP-2-C-methyl-D-erythritol 2-phosphate = 2-C-methyl-D-erythritol 2,4-cyclic diphosphate + CMP. The protein operates within isoprenoid biosynthesis; isopentenyl diphosphate biosynthesis via DXP pathway; isopentenyl diphosphate from 1-deoxy-D-xylulose 5-phosphate: step 2/6. Its pathway is isoprenoid biosynthesis; isopentenyl diphosphate biosynthesis via DXP pathway; isopentenyl diphosphate from 1-deoxy-D-xylulose 5-phosphate: step 4/6. Bifunctional enzyme that catalyzes the formation of 4-diphosphocytidyl-2-C-methyl-D-erythritol from CTP and 2-C-methyl-D-erythritol 4-phosphate (MEP) (IspD), and catalyzes the conversion of 4-diphosphocytidyl-2-C-methyl-D-erythritol 2-phosphate (CDP-ME2P) to 2-C-methyl-D-erythritol 2,4-cyclodiphosphate (ME-CPP) with a corresponding release of cytidine 5-monophosphate (CMP) (IspF). The chain is Bifunctional enzyme IspD/IspF from Rhodopseudomonas palustris (strain BisB18).